The primary structure comprises 205 residues: MGTMMRIGLTGGIAAGKSTVAARLKQLGALHIDYDALAHQIVEPGGVALPQIVAEFGPDALLADGTMNRPWIADHVFGANAAPGARERLDAIEHPLIYAEAARLEHEHPEAAIIIHDIPLLAEVIDDIPFAFDHIVTVEAPVCMRLDRMVEERGMSLEQAEARIRHQSSEEERRAIADIVIDSTHPLPEMLAQVGEIYAGWCAGR.

The 200-residue stretch at 6–205 (RIGLTGGIAA…EIYAGWCAGR (200 aa)) folds into the DPCK domain. Residue 14–19 (AAGKST) coordinates ATP.

The protein belongs to the CoaE family.

Its subcellular location is the cytoplasm. The catalysed reaction is 3'-dephospho-CoA + ATP = ADP + CoA + H(+). Its pathway is cofactor biosynthesis; coenzyme A biosynthesis; CoA from (R)-pantothenate: step 5/5. In terms of biological role, catalyzes the phosphorylation of the 3'-hydroxyl group of dephosphocoenzyme A to form coenzyme A. This chain is Dephospho-CoA kinase, found in Bifidobacterium longum (strain NCC 2705).